A 318-amino-acid chain; its full sequence is MLSFQQIILRLQQYWADQGCALLQPYDMEVGAGTSHTATFLRALGPEPWKAAYVQPSRRPKDGRYGENPNRLQHYYQYQVVLKPAPSNILELYLGSLEALGFDLKANDIRFVEDDWENPTLGAWGLGWEVWLNGMEVTQFTYFQQVGGIDCRPITGEITYGLERLAMYLQGVDNVYKLQWTEGLSYGDVYLQNEQEQSAYNFEHSNVDFLLTAFGAHEGNAQQLMTQQLALPAYEQVLKAAHTFNLLDARGAISVTERAAYIGRIRNLARAVAQSYVDSRARLGYPMAPREWVAEIEKAGEAARKPAKVANAEEAARA.

Belongs to the class-II aminoacyl-tRNA synthetase family. Tetramer of two alpha and two beta subunits.

It localises to the cytoplasm. The catalysed reaction is tRNA(Gly) + glycine + ATP = glycyl-tRNA(Gly) + AMP + diphosphate. The chain is Glycine--tRNA ligase alpha subunit from Methylibium petroleiphilum (strain ATCC BAA-1232 / LMG 22953 / PM1).